Consider the following 226-residue polypeptide: 1-hydroxy-2-glutathionyl-2-methyl-3-butene dehydrogenase (226 aa).

It belongs to the short-chain dehydrogenases/reductases (SDR) family.

It catalyses the reaction 2-glutathionyl-2-methylbut-3-en-1-ol + 2 NAD(+) + H2O = 2-glutathionyl-2-methylbut-3-enoate + 2 NADH + 3 H(+). The catalysed reaction is 2-glutathionyl-2-methylbut-3-en-1-ol + NAD(+) = 2-glutathionyl-2-methylbut-3-enal + NADH + H(+). The enzyme catalyses 2-glutathionyl-2-methylbut-3-enal + NAD(+) + H2O = 2-glutathionyl-2-methylbut-3-enoate + NADH + 2 H(+). In terms of biological role, involved in isoprene degradation. Catalyzes the two-step NAD(+)-dependent oxidation of 2-glutathionyl-2-methylbut-3-en-1-ol (HGMB) to 2-glutathionyl-2-methylbut-3-enoate (GMBA). The sequence is that of 1-hydroxy-2-glutathionyl-2-methyl-3-butene dehydrogenase from Rhodococcus sp. (strain AD45).